We begin with the raw amino-acid sequence, 505 residues long: Glycerol kinase (505 aa).

Thr-14 lines the ADP pocket. 3 residues coordinate ATP: Thr-14, Thr-15, and Ser-16. Thr-14 contacts sn-glycerol 3-phosphate. Arg-18 is a binding site for ADP. 4 residues coordinate sn-glycerol 3-phosphate: Arg-84, Glu-85, Tyr-136, and Asp-246. Positions 84, 85, 136, 246, and 247 each coordinate glycerol. 2 residues coordinate ADP: Thr-268 and Gly-311. Thr-268, Gly-311, Gln-315, and Gly-412 together coordinate ATP. ADP contacts are provided by Gly-412 and Asn-416.

Belongs to the FGGY kinase family.

It carries out the reaction glycerol + ATP = sn-glycerol 3-phosphate + ADP + H(+). It functions in the pathway polyol metabolism; glycerol degradation via glycerol kinase pathway; sn-glycerol 3-phosphate from glycerol: step 1/1. With respect to regulation, inhibited by fructose 1,6-bisphosphate (FBP). Key enzyme in the regulation of glycerol uptake and metabolism. Catalyzes the phosphorylation of glycerol to yield sn-glycerol 3-phosphate. The protein is Glycerol kinase of Vibrio cholerae serotype O1 (strain M66-2).